We begin with the raw amino-acid sequence, 286 residues long: Protein FAM87A (286 aa).

2 helical membrane passes run 68–88 (YLHS…ETAL) and 161–181 (SFFV…GDML).

This sequence belongs to the FAM87 family.

It is found in the membrane. The protein is Protein FAM87A (FAM87A) of Homo sapiens (Human).